The sequence spans 261 residues: MLARHGPRYGGSVNGHSDDSSGDAKQAAPTLYIFPHAGGTAKDYVAFSREFSADVKRIAVQYPGQHDRSGLPPLESIPTLADEIFAMMKPSARIDDPVAFFGHSMGGMLAFEVALRYQSAGHRVLAFFVSACSAPGHIRYKQLQDLSDREMLDLFTRMTGMNPDFFTDDEFFVGALPTLRAVRAIAGYSCPPETKLSCPIYAFIGDKDWIATQDDMDPWRDRTTEEFSIRVFPGDHFYLNDNLPELVSDIEDKTLQWHDRA.

The segment at 1–24 (MLARHGPRYGGSVNGHSDDSSGDA) is disordered. Active-site residues include Ser104, Asp208, and His236.

This sequence belongs to the thioesterase family.

The enzyme catalyses a fatty acyl-CoA + H2O = a fatty acid + CoA + H(+). In terms of biological role, involved in the synthesis of both phthiocerol dimycocerosates (PDIMs) and phenolic glycolipids (PGLs), which are structurally related lipids non-covalently bound to the outer cell wall layer of M.tuberculosis and are important virulence factors. The protein is Thioesterase TesA (tesA) of Mycobacterium bovis (strain ATCC BAA-935 / AF2122/97).